A 246-amino-acid polypeptide reads, in one-letter code: Probable transcriptional regulatory protein YebC (246 aa).

The tract at residues 1–20 (MAGHSKWANTRHRKAAQDAK) is disordered.

It belongs to the TACO1 family.

It is found in the cytoplasm. The protein is Probable transcriptional regulatory protein YebC of Salmonella typhimurium (strain LT2 / SGSC1412 / ATCC 700720).